The sequence spans 200 residues: Dephospho-CoA kinase (200 aa).

The DPCK domain occupies 4 to 200; sequence VIGLTGGIGS…QKYIKMSHLY (197 aa). Residue 12-17 participates in ATP binding; that stretch reads GSGKTT.

This sequence belongs to the CoaE family.

It is found in the cytoplasm. The catalysed reaction is 3'-dephospho-CoA + ATP = ADP + CoA + H(+). It participates in cofactor biosynthesis; coenzyme A biosynthesis; CoA from (R)-pantothenate: step 5/5. In terms of biological role, catalyzes the phosphorylation of the 3'-hydroxyl group of dephosphocoenzyme A to form coenzyme A. The protein is Dephospho-CoA kinase of Photobacterium profundum (strain SS9).